The primary structure comprises 64 residues: Translation machinery-associated protein 7 homolog (64 aa).

A disordered region spans residues 1 to 64; the sequence is MSGRQGGKAK…GGGIKKSGKK (64 aa). Positions 21-50 form a coiled coil; sequence DLSEEDVEFKKKQQEEAKKIKEMAAKAGQR. Residues 28 to 44 are compositionally biased toward basic and acidic residues; it reads EFKKKQQEEAKKIKEMA. Residues 53–64 show a composition bias toward gly residues; the sequence is LLGGGIKKSGKK.

It belongs to the TMA7 family.

This is Translation machinery-associated protein 7 homolog from Caenorhabditis briggsae.